The chain runs to 378 residues: Queuine tRNA-ribosyltransferase (378 aa).

Asp-93 (proton acceptor) is an active-site residue. Residues 93-97 (DSGGF), Asp-147, Gln-189, and Gly-216 each bind substrate. Residues 247 to 253 (GVGTFRE) form an RNA binding region. The active-site Nucleophile is Asp-266. An RNA binding; important for wobble base 34 recognition region spans residues 271–275 (TRVAR). Residues Cys-308, Cys-310, Cys-313, and His-339 each contribute to the Zn(2+) site.

It belongs to the queuine tRNA-ribosyltransferase family. Homodimer. Within each dimer, one monomer is responsible for RNA recognition and catalysis, while the other monomer binds to the replacement base PreQ1. Requires Zn(2+) as cofactor.

The enzyme catalyses 7-aminomethyl-7-carbaguanine + guanosine(34) in tRNA = 7-aminomethyl-7-carbaguanosine(34) in tRNA + guanine. Its pathway is tRNA modification; tRNA-queuosine biosynthesis. Its function is as follows. Catalyzes the base-exchange of a guanine (G) residue with the queuine precursor 7-aminomethyl-7-deazaguanine (PreQ1) at position 34 (anticodon wobble position) in tRNAs with GU(N) anticodons (tRNA-Asp, -Asn, -His and -Tyr). Catalysis occurs through a double-displacement mechanism. The nucleophile active site attacks the C1' of nucleotide 34 to detach the guanine base from the RNA, forming a covalent enzyme-RNA intermediate. The proton acceptor active site deprotonates the incoming PreQ1, allowing a nucleophilic attack on the C1' of the ribose to form the product. After dissociation, two additional enzymatic reactions on the tRNA convert PreQ1 to queuine (Q), resulting in the hypermodified nucleoside queuosine (7-(((4,5-cis-dihydroxy-2-cyclopenten-1-yl)amino)methyl)-7-deazaguanosine). This Gloeobacter violaceus (strain ATCC 29082 / PCC 7421) protein is Queuine tRNA-ribosyltransferase.